Here is a 342-residue protein sequence, read N- to C-terminus: Cytochrome f (342 aa).

The N-terminal stretch at 1–28 (MKKQWIAGAFGLTAALAGLVSVPQSALA) is a signal peptide. Positions 48, 51, and 52 each coordinate heme. The chain crosses the membrane as a helical span at residues 305–325 (VTWLVAFLAAAFICQLLLVLK).

This sequence belongs to the cytochrome f family. In terms of assembly, the 4 large subunits of the cytochrome b6-f complex are cytochrome b6, subunit IV (17 kDa polypeptide, PetD), cytochrome f and the Rieske protein, while the 4 small subunits are PetG, PetL, PetM and PetN. The complex functions as a dimer. Heme is required as a cofactor.

The protein resides in the cell inner membrane. Component of the cytochrome b6-f complex, which mediates electron transfer between photosystem II (PSII) and photosystem I (PSI), cyclic electron flow around PSI, and state transitions. This Gloeobacter violaceus (strain ATCC 29082 / PCC 7421) protein is Cytochrome f (petA).